We begin with the raw amino-acid sequence, 562 residues long: Dihydroxy-acid dehydratase (562 aa).

Mg(2+) is bound at residue aspartate 80. Cysteine 121 is a [2Fe-2S] cluster binding site. Positions 122 and 123 each coordinate Mg(2+). Lysine 123 carries the post-translational modification N6-carboxylysine. Cysteine 194 is a binding site for [2Fe-2S] cluster. Glutamate 446 contacts Mg(2+). Serine 472 acts as the Proton acceptor in catalysis.

This sequence belongs to the IlvD/Edd family. Homodimer. The cofactor is [2Fe-2S] cluster. Mg(2+) serves as cofactor.

It carries out the reaction (2R)-2,3-dihydroxy-3-methylbutanoate = 3-methyl-2-oxobutanoate + H2O. It catalyses the reaction (2R,3R)-2,3-dihydroxy-3-methylpentanoate = (S)-3-methyl-2-oxopentanoate + H2O. It participates in amino-acid biosynthesis; L-isoleucine biosynthesis; L-isoleucine from 2-oxobutanoate: step 3/4. It functions in the pathway amino-acid biosynthesis; L-valine biosynthesis; L-valine from pyruvate: step 3/4. In terms of biological role, functions in the biosynthesis of branched-chain amino acids. Catalyzes the dehydration of (2R,3R)-2,3-dihydroxy-3-methylpentanoate (2,3-dihydroxy-3-methylvalerate) into 2-oxo-3-methylpentanoate (2-oxo-3-methylvalerate) and of (2R)-2,3-dihydroxy-3-methylbutanoate (2,3-dihydroxyisovalerate) into 2-oxo-3-methylbutanoate (2-oxoisovalerate), the penultimate precursor to L-isoleucine and L-valine, respectively. The chain is Dihydroxy-acid dehydratase from Staphylococcus aureus (strain Mu50 / ATCC 700699).